The following is a 170-amino-acid chain: Envelope protein 168 (170 aa).

A topological domain (intravirion) is located at residue M1. A helical membrane pass occupies residues 2-22 (FYPVVQILIGIILVIILILGF). The Virion surface segment spans residues 23–170 (YHLKRKPPKK…TVMGIARNVL (148 aa)).

The protein belongs to the asfivirus envelope protein p22 family.

Its subcellular location is the virion membrane. It is found in the host cell membrane. The polypeptide is Envelope protein 168 (African swine fever virus (isolate Tick/South Africa/Pretoriuskop Pr4/1996) (ASFV)).